A 398-amino-acid chain; its full sequence is Minor cardiolipin synthase ClsB (398 aa).

Residues Val3–Phe23 form a helical membrane-spanning segment. 2 PLD phosphodiesterase domains span residues Met141–Tyr168 and Tyr311–Ser338.

Belongs to the phospholipase D family. Cardiolipin synthase subfamily.

The protein localises to the cell membrane. Functionally, involved in the biosynthesis of cardiolipin. This is Minor cardiolipin synthase ClsB (clsB) from Bacillus subtilis (strain 168).